The following is a 351-amino-acid chain: MTIAIGQEKTRGGFDLVDDWLKRDRFVFVGWSGLLLFPCAYLAVGGWLTGTTFVTSWYTHGLASSYLEGCNFLTAAVSTPANSMGHSLLFLWGPEAQGDFTRWCQIGGLWAFIALHGSFGLIGFCLRQFEIARLVGLRPYNAIAFSGPIAVFVSVFLMYPLGQASWFFAPSLGVAAIFRFLLFLQGFHNWTLNPFHMMGVAGILGGALLCAIHGATVQNTLFEDGDAADTFRAFTPTQSEETYSMVTANRFWSQIFGVAFSNKRWLHFFMLFVPVTGLWTSAFGIVGLALNLRAYDFVSQELRAAEDPEFETFYTKNILLNEGIRSWMAAQDQPHENFIFPEEVLPRGNAL.

A helical membrane pass occupies residues 39–59; sequence CAYLAVGGWLTGTTFVTSWYT. His116 provides a ligand contact to chlorophyll a. Residues 123–139 traverse the membrane as a helical segment; the sequence is GFCLRQFEIARLVGLRP. Pheophytin a contacts are provided by Gln128 and Asn141. Residues 151–164 form a helical membrane-spanning segment; it reads VFVSVFLMYPLGQA. Chlorophyll a is bound at residue His196. The chain crosses the membrane as a helical span at residues 206–226; that stretch reads GALLCAIHGATVQNTLFEDGD. Residues His213 and Phe260 each coordinate a plastoquinone. Residue His213 participates in Fe cation binding. His267 is a Fe cation binding site. The helical transmembrane segment at 277–293 threads the bilayer; it reads GLWTSAFGIVGLALNLR.

Belongs to the reaction center PufL/M/PsbA/D family. In terms of assembly, PSII is composed of 1 copy each of membrane proteins PsbA, PsbB, PsbC, PsbD, PsbE, PsbF, PsbH, PsbI, PsbJ, PsbK, PsbL, PsbM, PsbT, PsbX, PsbY, PsbZ, Psb30/Ycf12, at least 3 peripheral proteins of the oxygen-evolving complex and a large number of cofactors. It forms dimeric complexes. The D1/D2 heterodimer binds P680, chlorophylls that are the primary electron donor of PSII, and subsequent electron acceptors. It shares a non-heme iron and each subunit binds pheophytin, quinone, additional chlorophylls, carotenoids and lipids. There is also a Cl(-1) ion associated with D1 and D2, which is required for oxygen evolution. The PSII complex binds additional chlorophylls, carotenoids and specific lipids. serves as cofactor.

It is found in the plastid. The protein localises to the chloroplast thylakoid membrane. It catalyses the reaction 2 a plastoquinone + 4 hnu + 2 H2O = 2 a plastoquinol + O2. Functionally, photosystem II (PSII) is a light-driven water:plastoquinone oxidoreductase that uses light energy to abstract electrons from H(2)O, generating O(2) and a proton gradient subsequently used for ATP formation. It consists of a core antenna complex that captures photons, and an electron transfer chain that converts photonic excitation into a charge separation. The D1/D2 (PsbA/PsbD) reaction center heterodimer binds P680, the primary electron donor of PSII as well as several subsequent electron acceptors. D2 is needed for assembly of a stable PSII complex. The protein is Photosystem II D2 protein of Porphyra purpurea (Red seaweed).